The sequence spans 319 residues: tRNA (guanine-N(7)-)-methyltransferase (319 aa).

Residues E28, E51, and D75 each contribute to the S-adenosyl-L-methionine site. Residues D134 and 167–170 contribute to the substrate site; that span reads TKYE.

The protein belongs to the class I-like SAM-binding methyltransferase superfamily. TrmB family.

The catalysed reaction is guanosine(46) in tRNA + S-adenosyl-L-methionine = N(7)-methylguanosine(46) in tRNA + S-adenosyl-L-homocysteine. The protein operates within tRNA modification; N(7)-methylguanine-tRNA biosynthesis. Catalyzes the formation of N(7)-methylguanine at position 46 (m7G46) in tRNA. This is tRNA (guanine-N(7)-)-methyltransferase from Coprothermobacter proteolyticus (strain ATCC 35245 / DSM 5265 / OCM 4 / BT).